A 425-amino-acid polypeptide reads, in one-letter code: L-lysine 2,3-aminomutase (425 aa).

In terms of domain architecture, Radical SAM core spans 113–325; it reads HRYPDRVLLL…GLRGHTSGYA (213 aa). Residues Cys-127, Cys-131, and Cys-134 each contribute to the [4Fe-4S] cluster site. At Lys-339 the chain carries N6-(pyridoxal phosphate)lysine.

This sequence belongs to the radical SAM superfamily. KamA family. In terms of assembly, homotetramer. [4Fe-4S] cluster is required as a cofactor. The cofactor is pyridoxal 5'-phosphate.

It catalyses the reaction L-lysine = (3S)-3,6-diaminohexanoate. It functions in the pathway amino-acid degradation; L-lysine degradation via acetate pathway. Functionally, catalyzes the interconversion of L-alpha-lysine and L-beta-lysine. In Fusobacterium nucleatum subsp. nucleatum (strain ATCC 25586 / DSM 15643 / BCRC 10681 / CIP 101130 / JCM 8532 / KCTC 2640 / LMG 13131 / VPI 4355), this protein is L-lysine 2,3-aminomutase.